Reading from the N-terminus, the 443-residue chain is Crh-like protein 2 (443 aa).

An N-terminal signal peptide occupies residues 1–20; the sequence is MVRIGSSLLLATLAATTVSA. Residues 21–306 form the GH16 domain; sequence ASDPPKCSQD…TVECYDPPSG (286 aa). A disulfide bond links C56 and C67. E164 acts as the Nucleophile in catalysis. The active-site Proton donor is the E168. E168 contributes to the chitin binding site. N-linked (GlcNAc...) asparagine glycosylation is found at N194 and N237. Residues W257 and T268 each coordinate chitin. N-linked (GlcNAc...) asparagine glycans are attached at residues N332 and N359. Low complexity-rich tracts occupy residues 350–367 and 378–410; these read ASSS…SANT and EPGN…SETS. Positions 350 to 420 are disordered; that stretch reads ASSSASGSAN…ASSNKNAAPS (71 aa). Residues 411 to 420 are compositionally biased toward polar residues; that stretch reads ASSNKNAAPS. A lipid anchor (GPI-like-anchor amidated asparagine) is attached at N416. Residues 417–443 constitute a propeptide, removed in mature form; sequence AAPSQNERVLNGSFFAVLVAVVALVTL. N-linked (GlcNAc...) asparagine glycosylation is present at N427.

This sequence belongs to the glycosyl hydrolase 16 family. CRH1 subfamily. In terms of processing, the GPI-like anchor contains a phosphoceramide lipid group. The anchor position has not been determined.

Its subcellular location is the cell membrane. The protein resides in the secreted. It localises to the cell wall. It catalyses the reaction Random endo-hydrolysis of N-acetyl-beta-D-glucosaminide (1-&gt;4)-beta-linkages in chitin and chitodextrins.. Functionally, dual chitinase/transglycosylase that plays a role in cell wall architecture. Chitinase and transglycosylase activities are coupled. Required for the polysaccharide cross-linking at the septa and the cell wall. More specifically, transfers chitin to 1,6-beta-glucan in the cell wall. The chain is Crh-like protein 2 from Aspergillus fumigatus (strain ATCC MYA-4609 / CBS 101355 / FGSC A1100 / Af293) (Neosartorya fumigata).